We begin with the raw amino-acid sequence, 124 residues long: S-adenosylmethionine decarboxylase proenzyme (124 aa).

Ser63 functions as the Schiff-base intermediate with substrate; via pyruvic acid in the catalytic mechanism. Ser63 is subject to Pyruvic acid (Ser); by autocatalysis. Residue His68 is the Proton acceptor; for processing activity of the active site. Cys83 serves as the catalytic Proton donor; for catalytic activity.

It belongs to the prokaryotic AdoMetDC family. Type 1 subfamily. In terms of assembly, heterotetramer of two alpha and two beta chains arranged as a dimer of alpha/beta heterodimers. It depends on pyruvate as a cofactor. In terms of processing, is synthesized initially as an inactive proenzyme. Formation of the active enzyme involves a self-maturation process in which the active site pyruvoyl group is generated from an internal serine residue via an autocatalytic post-translational modification. Two non-identical subunits are generated from the proenzyme in this reaction, and the pyruvate is formed at the N-terminus of the alpha chain, which is derived from the carboxyl end of the proenzyme. The post-translation cleavage follows an unusual pathway, termed non-hydrolytic serinolysis, in which the side chain hydroxyl group of the serine supplies its oxygen atom to form the C-terminus of the beta chain, while the remainder of the serine residue undergoes an oxidative deamination to produce ammonia and the pyruvoyl group blocking the N-terminus of the alpha chain.

The catalysed reaction is S-adenosyl-L-methionine + H(+) = S-adenosyl 3-(methylsulfanyl)propylamine + CO2. It functions in the pathway amine and polyamine biosynthesis; S-adenosylmethioninamine biosynthesis; S-adenosylmethioninamine from S-adenosyl-L-methionine: step 1/1. Functionally, catalyzes the decarboxylation of S-adenosylmethionine to S-adenosylmethioninamine (dcAdoMet), the propylamine donor required for the synthesis of the polyamines spermine and spermidine from the diamine putrescine. The polypeptide is S-adenosylmethionine decarboxylase proenzyme (Anoxybacillus flavithermus (strain DSM 21510 / WK1)).